Reading from the N-terminus, the 142-residue chain is Organic hydroperoxide resistance protein-like 2 (142 aa).

It belongs to the OsmC/Ohr family.

In Staphylococcus epidermidis (strain ATCC 35984 / DSM 28319 / BCRC 17069 / CCUG 31568 / BM 3577 / RP62A), this protein is Organic hydroperoxide resistance protein-like 2.